The following is a 90-amino-acid chain: Serine protease inhibitor kazal-like protein, minor form (90 aa).

The signal sequence occupies residues 1-23; sequence MSSTWIKFLFILTLVLLPYSVFS. Residues 33-89 enclose the Kazal-like domain; the sequence is VIKEPNCTMYKSKSECSNIAENPVCADDRNTYYNECYFCIEKVVEKLKYRYHGICIY. Asn-38 is a glycosylation site (N-linked (GlcNAc...) asparagine).

As to expression, luminal fluid and mucosal folds of the seminal vesicles (at protein level). Not detected in brain, heart, lung, liver, kidney, stomach, small intestine, muscle, skin, thymus, placenta or bladder.

The protein localises to the secreted. Its function is as follows. Does not function as an inhibitor of trypsin, chymotrypsin, subtilisin or elastase. Binds sperm and enhances sperm motility. May act as a decapacitation factor, suppresses BSA-stimulated sperm capacitation and blocks sperm-oocyte interactions in vitro. The chain is Serine protease inhibitor kazal-like protein, minor form (Spinkl) from Mus musculus (Mouse).